The following is a 328-amino-acid chain: PhoH-like protein (328 aa).

135–142 (GPAGTGKT) contributes to the ATP binding site.

It belongs to the PhoH family.

Its subcellular location is the cytoplasm. This Synechocystis sp. (strain ATCC 27184 / PCC 6803 / Kazusa) protein is PhoH-like protein.